Reading from the N-terminus, the 54-residue chain is Ribulose bisphosphate carboxylase large chain (54 aa).

The propeptide occupies 1–2 (MS). Position 3 is an N-acetylproline (Pro-3). Lys-14 is subject to N6,N6,N6-trimethyllysine.

It belongs to the RuBisCO large chain family. Type I subfamily. As to quaternary structure, heterohexadecamer of 8 large chains and 8 small chains.

It localises to the plastid. It is found in the chloroplast. The catalysed reaction is 2 (2R)-3-phosphoglycerate + 2 H(+) = D-ribulose 1,5-bisphosphate + CO2 + H2O. The enzyme catalyses D-ribulose 1,5-bisphosphate + O2 = 2-phosphoglycolate + (2R)-3-phosphoglycerate + 2 H(+). Its function is as follows. RuBisCO catalyzes two reactions: the carboxylation of D-ribulose 1,5-bisphosphate, the primary event in carbon dioxide fixation, as well as the oxidative fragmentation of the pentose substrate in the photorespiration process. Both reactions occur simultaneously and in competition at the same active site. This chain is Ribulose bisphosphate carboxylase large chain (rbcL), found in Magnolia liliiflora (Mulan magnolia).